The sequence spans 338 residues: 2,3-dihydroxybenzoate decarboxylase (338 aa).

Cys251 is a catalytic residue.

The protein belongs to the metallo-dependent hydrolases superfamily. As to quaternary structure, homotetramer.

It catalyses the reaction 2,3-dihydroxybenzoate + H(+) = catechol + CO2. The protein operates within aromatic compound metabolism; benzoate degradation via hydroxylation. In terms of biological role, has an absolute substrate specificity for 2,3-DHBA. The sequence is that of 2,3-dihydroxybenzoate decarboxylase from Aspergillus oryzae (strain ATCC 42149 / RIB 40) (Yellow koji mold).